Consider the following 182-residue polypeptide: Transmembrane protein 11 homolog, mitochondrial (182 aa).

Position 25 is a phosphoserine (S25). Helical transmembrane passes span 70 to 89 (TAVA…RDRP) and 91 to 108 (IAAP…LYTV).

This sequence belongs to the TMEM11 family.

Its subcellular location is the mitochondrion inner membrane. Functionally, plays a role in mitochondrial morphogenesis. The chain is Transmembrane protein 11 homolog, mitochondrial (Pmi) from Drosophila melanogaster (Fruit fly).